Reading from the N-terminus, the 33-residue chain is Glutaminase-asparaginase (33 aa).

Residues 1–33 form the Asparaginase/glutaminase domain; the sequence is NVVVLATGGTIAGAGTNAFASQXGPLGMVVEGK. The active-site Acyl-ester intermediate is the threonine 10.

The protein belongs to the asparaginase 1 family. As to quaternary structure, homotetramer.

The protein resides in the periplasm. It carries out the reaction L-glutamine + H2O = L-glutamate + NH4(+). The enzyme catalyses L-asparagine + H2O = L-aspartate + NH4(+). This is Glutaminase-asparaginase (ansB) from Delftia acidovorans (Pseudomonas acidovorans).